A 310-amino-acid chain; its full sequence is HTH-type transcriptional activator TtdR (310 aa).

An HTH lysR-type domain is found at 6–63; it reads PLAKDLQVLVEIVHSGSFSAAAATLGQTPAFVTKRIQILENTLATTLLNRSARGVALT. The H-T-H motif DNA-binding region spans 23–42; the sequence is FSAAAATLGQTPAFVTKRIQ.

The protein belongs to the LysR transcriptional regulatory family.

Functionally, positive regulator required for L-tartrate-dependent anaerobic growth on glycerol. Induces expression of the ttdA-ttdB-ygjE operon. In Escherichia coli O6:H1 (strain CFT073 / ATCC 700928 / UPEC), this protein is HTH-type transcriptional activator TtdR (ttdR).